A 570-amino-acid chain; its full sequence is Methionine--tRNA ligase (570 aa).

Residues 14-24 (PYINGIKHLGN) carry the 'HIGH' region motif. The Zn(2+) site is built by Cys-146, Cys-149, Cys-159, and Cys-162. The 'KMSKS' region motif lies at 347–351 (QFSTS). An ATP-binding site is contributed by Thr-350.

The protein belongs to the class-I aminoacyl-tRNA synthetase family. MetG type 1 subfamily. As to quaternary structure, monomer. Zn(2+) is required as a cofactor.

Its subcellular location is the cytoplasm. The enzyme catalyses tRNA(Met) + L-methionine + ATP = L-methionyl-tRNA(Met) + AMP + diphosphate. Its function is as follows. Is required not only for elongation of protein synthesis but also for the initiation of all mRNA translation through initiator tRNA(fMet) aminoacylation. The sequence is that of Methionine--tRNA ligase from Jannaschia sp. (strain CCS1).